A 986-amino-acid chain; its full sequence is Anoctamin-1 (986 aa).

Residues 1–333 (MRVNEKYSTL…FGEKIGLYFA (333 aa)) lie on the Cytoplasmic side of the membrane. Positions 79–121 (LVRRVQHSDTPSGARSVKQDHPLPGKGASLDAGSGEPPMDYHE) are disordered. Residues Ser-107 and Ser-196 each carry the phosphoserine modification. A helical transmembrane segment spans residues 334 to 354 (WLGVYTQMLIPASIVGIIVFL). The Extracellular portion of the chain corresponds to 355–406 (YGCATMDENIPSMEMCDQRHNITMCPLCDKTCSYWKMSSACATARASHLFDN). Intrachain disulfides connect Cys-370–Cys-395, Cys-379–Cys-862, Cys-382–Cys-386, and Cys-651–Cys-656. A helical membrane pass occupies residues 407 to 427 (PATVFFSVFMALWAATFMEHW). Glu-425 is a Ca(2+) binding site. Topologically, residues 428–519 (KRKQMRLNYR…RDRFPAYLTN (92 aa)) are cytoplasmic. The helical transmembrane segment at 520 to 540 (LVSIIFMIAVTFAIVLGVIIY) threads the bilayer. The Extracellular portion of the chain corresponds to 541–568 (RISMAAALAMNSSPSVRSNIRVTVTATA). The chain crosses the membrane as a helical span at residues 569 to 589 (VIINLVVIILLDEVYGCIARW). Over 590–607 (LTKIEVPKTEKSFEERLI) the chain is Cytoplasmic. Residues 608–628 (FKAFLLKFVNSYTPIFYVAFF) form a helical membrane-spanning segment. Residues 629–657 (KGRFVGRPGDYVYIFRSFRMEECAPGGCL) lie on the Extracellular side of the membrane. A helical transmembrane segment spans residues 658–678 (MELCIQLSIIMLGKQLIQNNL). Ca(2+)-binding residues include Asn-677, Glu-680, Glu-728, Glu-731, Glu-760, and Asp-764. The Cytoplasmic portion of the chain corresponds to 679–725 (FEIGIPKMKKLIRYLKLKQQSPPDHEECVKRKQRYEVDYNLEPFAGL). 2 helical membrane-spanning segments follow: residues 726 to 746 (TPEY…VASF) and 747 to 767 (PLAP…DAKK). Residues 768–784 (FVTELRRPVAVRAKDIG) are Cytoplasmic-facing. Residues 785-805 (IWYNILRGIGKLAVIINAFVI) form a helical membrane-spanning segment. The Extracellular segment spans residues 806-892 (SFTSDFIPRL…FWAVLAARLA (87 aa)). Asn-832 carries an N-linked (GlcNAc...) asparagine glycan. The chain crosses the membrane as a helical span at residues 893-913 (FVIVFQNLVMFMSDFVDWVIP). 2 residues coordinate Ca(2+): Asp-909 and Asp-914. The Cytoplasmic portion of the chain corresponds to 914-986 (DIPKDISQQI…PSHAYHGGVL (73 aa)). Residues 951–960 (KERQKDEPPC) show a composition bias toward basic and acidic residues. The segment at 951-986 (KERQKDEPPCNHHNTKACPDSLGSPAPSHAYHGGVL) is disordered.

It belongs to the anoctamin family. Homodimer. Interacts with CFTR. Interacts with TRPV4. Expressed in nasal epithelial cells (at protein level). In the kidney, expressed in the collecting duct (at protein level). Broadly expressed with higher levels in liver, skeletal muscle and gastrointestinal muscles. Expressed in eccrine sweat glands.

It localises to the apical cell membrane. The protein localises to the presynapse. The enzyme catalyses chloride(in) = chloride(out). ATP and calmodulin are essential for its activation. Channel activity is inhibited by CFTR protein and by chloride inhibitors such as niflumic acid (NFA) and 4,4'-diisothiocyanatostilbene-2,2'-disulfonic acid (DIDS). Activated by heat with activation seen at temperatures above 44 degrees Celsius. Activated by BDNF in radial glial cells. In terms of biological role, calcium-activated chloride channel (CaCC). Plays a role in transepithelial anion transport and smooth muscle contraction. Required for the normal functioning of the interstitial cells of Cajal (ICCs) which generate electrical pacemaker activity in gastrointestinal smooth muscles. Acts as a major contributor to basal and stimulated chloride conductance in airway epithelial cells and plays an important role in tracheal cartilage development. Required for CFTR activation by enhancing endoplasmic reticulum Ca(2+) store release and is also required for CFTR membrane expression. Required for basal and ATP-dependent mucus secretion in airways and intestine, probably by controlling exocytosis of mucus-filled granules by providing Ca(2+) to an apical signaling compartment. Contributes to airway mucus expression induced by interleukins IL3 and IL8 and by the asthma-associated protein CLCA1 and is required for expression of mucin MUC5AC. However, was shown in another study not to be required for MUC5AC expression. Plays a role in the propagation of Ca(2+) waves in Kolliker's organ in the cochlea and contributes to the refinement of auditory brainstem circuitries prior to hearing onset. In vomeronasal sensory neurons, modulates spontaneous firing patterns in the absence of stimuli as well as the firing pattern of pheromone-evoked activity. Responsible for calcium-activated chloride channel activity in type I taste cells of the vallate papillae. Acts as a heat sensor in nociceptive neurons. In dorsal root ganglion neurons, plays a role in mediating non-histaminergic Mas-related G-protein coupled receptor (MRGPR)-dependent itching, acting as a downstream effector of MRGPRs. In the developing brain, required for the Ca(2+)-dependent process extension of radial glial cells. Calcium-activated chloride channel (CaCC). Contributes to calcium-activated chloride secretion in human sweat gland epithelial cells. Shows increased basal chloride permeability and decreased Ca(2+)-induced chloride permeability. Its function is as follows. Calcium-activated chloride channel (CaCC). Shows increased sensitivity to intracellular Ca(2+). The protein is Anoctamin-1 (ANO1) of Homo sapiens (Human).